We begin with the raw amino-acid sequence, 132 residues long: Small ribosomal subunit protein uS8c (132 aa).

The protein belongs to the universal ribosomal protein uS8 family. As to quaternary structure, part of the 30S ribosomal subunit.

It localises to the plastid. The protein resides in the chloroplast. One of the primary rRNA binding proteins, it binds directly to 16S rRNA central domain where it helps coordinate assembly of the platform of the 30S subunit. This chain is Small ribosomal subunit protein uS8c (rps8), found in Pinus thunbergii (Japanese black pine).